A 423-amino-acid polypeptide reads, in one-letter code: Kynureninase (423 aa).

Pyridoxal 5'-phosphate-binding positions include leucine 105, serine 106, 133 to 136, aspartate 218, histidine 221, and tyrosine 243; that span reads FPSD. Lysine 244 carries the post-translational modification N6-(pyridoxal phosphate)lysine. Residues tryptophan 273 and asparagine 301 each contribute to the pyridoxal 5'-phosphate site.

Belongs to the kynureninase family. In terms of assembly, homodimer. Pyridoxal 5'-phosphate serves as cofactor.

The catalysed reaction is L-kynurenine + H2O = anthranilate + L-alanine + H(+). The enzyme catalyses 3-hydroxy-L-kynurenine + H2O = 3-hydroxyanthranilate + L-alanine + H(+). It participates in amino-acid degradation; L-kynurenine degradation; L-alanine and anthranilate from L-kynurenine: step 1/1. Its pathway is cofactor biosynthesis; NAD(+) biosynthesis; quinolinate from L-kynurenine: step 2/3. Its function is as follows. Catalyzes the cleavage of L-kynurenine (L-Kyn) and L-3-hydroxykynurenine (L-3OHKyn) into anthranilic acid (AA) and 3-hydroxyanthranilic acid (3-OHAA), respectively. In Xanthomonas axonopodis pv. citri (strain 306), this protein is Kynureninase.